The primary structure comprises 218 residues: GTP cyclohydrolase 1 (218 aa).

The Zn(2+) site is built by C109, H112, and C180.

This sequence belongs to the GTP cyclohydrolase I family. Toroid-shaped homodecamer, composed of two pentamers of five dimers.

The enzyme catalyses GTP + H2O = 7,8-dihydroneopterin 3'-triphosphate + formate + H(+). It functions in the pathway cofactor biosynthesis; 7,8-dihydroneopterin triphosphate biosynthesis; 7,8-dihydroneopterin triphosphate from GTP: step 1/1. This Actinobacillus pleuropneumoniae serotype 5b (strain L20) protein is GTP cyclohydrolase 1.